The primary structure comprises 812 residues: Ras guanine nucleotide exchange factor J (812 aa).

Low complexity-rich tracts occupy residues 1–36 (MSNP…NSKS) and 53–65 (LLNR…NLNN). The segment at 1–146 (MSNPVSINNS…GGSSGGLNMS (146 aa)) is disordered. Positions 75–86 (SFTSNYQNIYTP) are enriched in polar residues. Residues 87–101 (NNNSYNSSNNNNNNN) are compositionally biased toward low complexity. Gly residues predominate over residues 131 to 141 (NSGGGGGGSSG). One can recognise a LisH domain in the interval 214–246 (GRDTMLQLILQHLQFEGLMDSRKLLEEEARVQY). Positions 320–382 (IIYVDDKEKE…NNSIGNSNSY (63 aa)) are disordered. Residues 323–343 (VDDKEKEKEKEKEKEKEKDKF) show a composition bias toward basic and acidic residues. The segment covering 344–382 (GPNSTNSLSGSGSSPNIPSGMNNNSSSIGNNSIGNSNSY) has biased composition (low complexity). Residues 409-535 (NKPQVKAASL…LSESLNAKIK (127 aa)) form the N-terminal Ras-GEF domain. The Ras-GEF domain occupies 573–804 (DEEEIARQLT…YSRSMSFEPR (232 aa)).

Its function is as follows. Promotes the exchange of Ras-bound GDP by GTP. The protein is Ras guanine nucleotide exchange factor J (gefJ) of Dictyostelium discoideum (Social amoeba).